We begin with the raw amino-acid sequence, 2227 residues long: MNMSRQGIFQTVGSGLDHILSLADIEEEQMIQSVDRTAVTGASYFTSVDQSSVHTAEVGSHQVEPLRTSVDKPGSKKTQGEKFFLIHSADWLTTHALFHEVAKLDVVKLLYNEQFAVQGLLRYHTYARFGIEIQVQINPTPFQQGGLICAMVPGDQSYGSIASLTVYPHGLLNCNINNVVRIKVPFIYTRGAYHFKDPQYPVWELTIRVWSELNIGTGTSAYTSLNVLARFTDLELHGLTPLSTQMMRNEFRVSTTENVVNLSNYEDARAKMSFALDQEDWKSDPSQGGGIKITHFTTWTSIPTLAAQFPFNASDSVGQQIKVIPVDPYFFQMTNTNPDQKCITALASICQMFCFWRGDLVFDFQVFPTKYHSGRLLFCFVPGNELIDVSGITLKQATTAPCAVMDITGVQSTLRFRVPWISDTPYRVNRYTKSAHQKGEYTAIGKLIVYCYNRLTSPSNVASHVRVNVYLSAINLECFAPLYHAMDVTTQVGDDSGGFSTTVSTEQNVPDPQVGITTMKDLKGKANRGKMDVSGVQAPVGAITTIEDPVLAKKVPETFPELKPGESRHTSDHMSIYKFMGRSHFLCTFTFNSNNKEYTFPITLSSTSNPPHGLPSTLRWFFNLFQLYRGPLDLTIIIIGATDVDGMAWFTPVGLAVDTPWVEKESALSIDYKTALGAVRFNTRRTGNIQIRLPWYSYLYAVSGALDGLGDKTDSTFGLVSIQIANYNHSDEYLSFSCYLSVTEQSEFYFPRAPLNSNAMLSTESMMSRIAAGDLESSVDDPRSEEDKRFESHIECRKPYKELRLEVGKQRLKYAQEELSNEVLPPPRKKKGLFSQAKISLFYTEEHEIMKFSWRGVTADTRALRRFGFSLAAGRSVWTLEMDAGVLTGRLIRLNDEKWTEMKDDKIVSLIEKFTSNKYWSKVNFPHGMLDLEEIAANSKDFPNMSETDLCFLLHWLNPKKINLADRMLGLSGVQEIKEQGVGLIAECRTFLDSIAGTLKSMMFGFHHSVTVEIINTVLCFVKSGILLYVMQQLNQDEHSHIIGLLRVMNYVDIGCSVISCGKVFSKMLETVFNWQMDSRMMELRTQSFSNWLRDICSGITIFKNFKDAIYWLYTKLNDFYEVNYGKKKDILNILKDNQQKIEKAIEEADKFSILQIQDVEKFEQYQKGVDLIQKLRTVHSMAQVDPNLMVHLSPLRDCIARVHQKLKNLGSINQAMVTRCEPVVCYLYGKRGGGKSLTSIALATKICKHYGVEPEKNIYTKPVASDYWDGYSGQLVCIIDDIGQNTTDEDWSDFCQLVSGCPLRLNMASLEEKGRHFSSPFIIATSNWSNPSPKTVYVKEAIDRRLHFKVEVNPASFSKNPHNDMLNVNLAKTNDAIKDMSCVDLIMDGHNVSLMDLLSSLVMTVEIRKQNMTAFMELWSQGISDDDNDSAMAEFFQSFPSGEPSNSKLSGFFQSVTNHKWVAVGAAVGILGVLVGGWFVYKHFSRKEEEPIPAEGVYHGVTKPKQVIKLDADPVESQSTLEIAGLVRKNLVQFGVGEKNGCVRWVMNALGVKDDWLLVPSHAYKFEKDYEMMEFYFNRGGTYYSISAGNVVIQSLDVGFQDVVLMKVPTIPKFRDITQHFIKKGDVPRALNRLATLVTTVNGTPMLISEGPLKMEEKATYVHKKNDGTTVDLTVDQAWRGKGEGLPGMCGGALVSSNQSIQNAILGIHVAGGNSILVAKLVTQEMFQNIDKKIESQRIMKVEFTQCSMNVVSKTLFRKSPIHHHIDKTMINFPAAMPFSKAEIDPMAMMLSKYSLPIVEEPEDYKEASIFYQNKIVGKTQLVDDFLDLDMAITGAPGIDAINMDSSPGFPYVQERLTKRDLIWLDENGLLLGVHPRLAQRILFNTVMMENCSDLDVVFTTCPKDELRPLEKVLESKTRAIDACPLDYTILCRMYWGPAISYFHLNPGFHTGVAIGIDPDCQWDELFKTMIRFGDVGLDLDFSAFDASLSPFMIREAGRIMSELSGTPSHFGTALMNTIIYSKHLLYNCCYHVCGSMPSGSPCTALLNSIINNVNLYYVFSKIFGKSPVFFCQALKILCYGDDVLIVFSRDVQIDNLDLIGQKIVDEFKKLGMTATSADKNVPQLKPVSELTFLKRSFNLVEDRIRPAISEKTIWSLIAWQRSNAEFEQNLENAQWFAFMHGYEFYQKFYYFVQSCLEKEMIEYRLKSYDWWRMRFYDQCFICDLS.

2 consecutive short sequence motifs ((L)YPX(n)L motif) follow at residues tyrosine 167–leucine 171 and tyrosine 200–leucine 205. Residues methionine 766 to glutamine 836 are involved in P1-2A pentamerization. A helical membrane pass occupies residues valine 1010–valine 1030. Residues isoleucine 1043 to glutamate 1070 are membrane-penetrating ability. A coiled-coil region spans residues lysine 1127–phenylalanine 1152. The SF3 helicase domain occupies histidine 1204–methionine 1366. ATP is bound at residue glycine 1230–serine 1237. The helical transmembrane segment at tryptophan 1462 to tyrosine 1482 threads the bilayer. The residue at position 1499 (tyrosine 1499) is an O-(5'-phospho-RNA)-tyrosine. Positions aspartate 1514–phenylalanine 1728 constitute a Peptidase C3 domain. Catalysis depends on for protease 3C activity residues histidine 1563, aspartate 1603, and cysteine 1691. The region spanning aspartate 1976 to asparagine 2097 is the RdRp catalytic domain.

It belongs to the picornaviridae polyprotein family. Homodimer. Homomultimer; probably interacts with membranes in a multimeric form. Seems to assemble into amyloid-like fibers. In terms of assembly, homodimer. Monomer. Interacts with protein 3CD. As to quaternary structure, interacts with host ACBD3. Interacts with protein 3AB. In terms of assembly, interacts with human MAVS. As to quaternary structure, homodimer; disulfide-linked. Homopentamer. Homooligomer. In terms of assembly, interacts with capsid protein VP2. Interacts with capsid protein VP3. As to quaternary structure, interacts with capsid protein VP1. Interacts with capsid protein VP3. Interacts with capsid protein VP1. Interacts with capsid protein VP2. Post-translationally, specific enzymatic cleavages by viral protease in vivo yield a variety of precursors and mature proteins. Polyprotein processing intermediates are produced, such as P1-2A which is a functional precursor of the structural proteins, VP0 which is a VP4-VP2 precursor, VP1-2A precursor, 3ABC precursor which is a stable and catalytically active precursor of 3A, 3B and 3C proteins, 3AB and 3CD precursors. The assembly signal 2A is removed from VP1-2A by a host protease, possibly host Cathepsin L. This cleavage occurs over a region of 3 amino-acids probably generating VP1 proteins with heterogeneous C-termini. During virion maturation, immature virions are rendered infectious following cleavage of VP0 into VP4 and VP2. This maturation seems to be an autocatalytic event triggered by the presence of RNA in the capsid and is followed by a conformational change of the particle. In terms of processing, the assembly signal 2A is removed from VP1-2A by a host protease, possibly host Cathepsin L in naked virions. This cleavage does not occur in enveloped virions. This cleavage occurs over a region of 3 amino-acids probably generating VP1 proteins with heterogeneous C-termini. Post-translationally, VPg is uridylylated prior to priming replication into VPg-pUpU. Unlike other picornaviruses, does not seem to be myristoylated.

Its subcellular location is the virion. It localises to the host endosome. The protein resides in the host multivesicular body. The protein localises to the host membrane. It is found in the host mitochondrion outer membrane. Its subcellular location is the host cytoplasm. It localises to the host cytoplasmic vesicle membrane. The catalysed reaction is RNA(n) + a ribonucleoside 5'-triphosphate = RNA(n+1) + diphosphate. It carries out the reaction a ribonucleoside 5'-triphosphate + H2O = a ribonucleoside 5'-diphosphate + phosphate + H(+). The enzyme catalyses Selective cleavage of Gln-|-Gly bond in the poliovirus polyprotein. In other picornavirus reactions Glu may be substituted for Gln, and Ser or Thr for Gly.. In terms of biological role, capsid proteins VP1, VP2, and VP3 form a closed capsid enclosing the viral positive strand RNA genome. All these proteins contain a beta-sheet structure called beta-barrel jelly roll. Together they form an icosahedral capsid (T=3) composed of 60 copies of each VP1, VP2, and VP3, with a diameter of approximately 300 Angstroms. VP1 is situated at the 12 fivefold axes, whereas VP2 and VP3 are located at the quasi-sixfold axes. The naked capsid interacts with the host receptor HAVCR1 to provide virion attachment to and probably entry into the target cell. Functionally, VP0 precursor is a component of the immature procapsids. Plays a role in the assembly of the 12 pentamers into an icosahedral structure. Has not been detected in mature virions, supposedly owing to its small size. Its function is as follows. Precursor component of immature procapsids that corresponds to an extended form of the structural protein VP1. After maturation, possibly by the host Cathepsin L, the assembly signal 2A is cleaved to give rise to the mature VP1 protein. In terms of biological role, functions as a viroporin. Affects membrane integrity and causes an increase in membrane permeability. Involved in host intracellular membrane rearrangements probably to give rise to the viral factories. Does not disrupt calcium homeostasis or glycoprotein trafficking. Antagonizes the innate immune response of the host by suppressing IFN-beta synthesis, which it achieves by interfering with the RIG-I/IFIH1 pathway. Functionally, affects membrane integrity and causes an increase in membrane permeability. Associates with and induces structural rearrangements of intracellular membranes. Displays RNA-binding activity. Its function is as follows. The precursor 3ABC is targeted to the mitochondrial membrane where protease 3C activity cleaves and inhibits the host antiviral protein MAVS, thereby disrupting activation of IRF3 through the IFIH1/MDA5 pathway. In vivo, the protease activity of 3ABC precursor is more efficient in cleaving the 2BC precursor than that of protein 3C. The 3ABC precursor may therefore play a role in the proteolytic processing of the polyprotein. Possible viroporin. In terms of biological role, interacts with the 3CD precursor and with RNA structures found at both the 5'- and 3'-termini of the viral genome. Since the 3AB precursor contains the hydrophobic domain 3A, it probably anchors the whole viral replicase complex to intracellular membranes on which viral RNA synthesis occurs. Functionally, may serve as membrane anchor to the 3AB and 3ABC precursors via its hydrophobic domain. May interact with RNA. Acts as a primer for viral RNA replication and remains covalently bound to viral genomic RNA. VPg is uridylylated prior to priming replication into VPg-pUpU. The VPg-pUpU is then used as primer on the genomic RNA poly(A) by the RNA-dependent RNA polymerase to replicate the viral genome. Its function is as follows. Cysteine protease that generates mature viral proteins from the precursor polyprotein. In addition to its proteolytic activity, it binds to viral RNA, and thus influences viral genome replication. RNA and substrate bind cooperatively to the protease. Cleaves IKBKG/NEMO to impair innate immune signaling. Cleaves host PABPC1 which may participate in the switch of viral translation to RNA synthesis. In terms of biological role, interacts with the 3AB precursor and with RNA structures found at both the 5'- and 3'-termini of the viral genome. Disrupts TLR3 signaling by degrading the host adapter protein TICAM1/TRIF. Functionally, replicates genomic and antigenomic RNA by recognizing replications specific signals. In Cercopithecus hamlyni (Owl-faced monkey), this protein is Genome polyprotein.